Here is a 106-residue protein sequence, read N- to C-terminus: MKAKPSHQATSMSSSLRVSPSIHGYHFDTAARKKAVGNIFENIDQESLQRLFRNSGDKKAEERAKIIFAIDQDLEEKTRALMALKKRTKDKLLQFLKLRKYSIKVH.

In terms of assembly, monomer. Interacts with NOTCH2 (via ANK repeats), the interaction inhibits the nuclear translocation of NOTCH2 N2ICD. Interacts (C-terminus) with CBY1 (C-terminus), TCIM competes with CTNNB1 for the interaction with CBY1. As to expression, expressed in liver, expression levels decrease in regenerating liver. In bone marrow, expressed in large progenitor-like cells, cells with ring-shaped nuclei and, at lower, levels in hematopietic stem cell-like cells with round nuclei (at protein level).

It is found in the cytoplasm. The protein resides in the nucleus. Its subcellular location is the nucleolus. It localises to the nucleus speckle. Its function is as follows. Seems to be involved in the regulation of cell growth an differentiation, may play different and opposite roles depending on the tissue or cell type. May enhance the WNT-CTNNB1 pathway by relieving antagonistic activity of CBY1. Enhances the proliferation of follicular dendritic cells. Plays a role in the mitogen-activated MAPK2/3 signaling pathway, positively regulates G1-to-S-phase transition of the cell cycle. In endothelial cells, enhances key inflammatory mediators and inflammatory response through the modulation of NF-kappaB transcriptional regulatory activity. Involved in the regulation of heat shock response, seems to play a positive feedback with HSF1 to modulate heat-shock downstream gene expression. Plays a role in the regulation of hematopoiesis even if the mechanisms are unknown. In cancers such as thyroid or lung cancer, it has been described as promoter of cell proliferation, G1-to-S-phase transition and inhibitor of apoptosis. However, it negatively regulates self-renewal of liver cancer cells via suppresion of NOTCH2 signaling. This is Transcriptional and immune response regulator from Mus musculus (Mouse).